Here is a 472-residue protein sequence, read N- to C-terminus: UDP-N-acetylmuramoyl-L-alanyl-D-glutamate--2,6-diaminopimelate ligase (472 aa).

Ser21 contributes to the UDP-N-acetyl-alpha-D-muramoyl-L-alanyl-D-glutamate binding site. 99-105 is an ATP binding site; sequence GTNGKTS. UDP-N-acetyl-alpha-D-muramoyl-L-alanyl-D-glutamate contacts are provided by residues 143-144, Ser170, Gln176, and Arg178; that span reads TT. Lys210 carries the post-translational modification N6-carboxylysine. Meso-2,6-diaminopimelate is bound by residues Arg367, 391–394, Gly440, and Glu444; that span reads DNPR. Positions 391-394 match the Meso-diaminopimelate recognition motif motif; that stretch reads DNPR.

It belongs to the MurCDEF family. MurE subfamily. Requires Mg(2+) as cofactor. Carboxylation is probably crucial for Mg(2+) binding and, consequently, for the gamma-phosphate positioning of ATP.

It localises to the cytoplasm. The catalysed reaction is UDP-N-acetyl-alpha-D-muramoyl-L-alanyl-D-glutamate + meso-2,6-diaminopimelate + ATP = UDP-N-acetyl-alpha-D-muramoyl-L-alanyl-gamma-D-glutamyl-meso-2,6-diaminopimelate + ADP + phosphate + H(+). Its pathway is cell wall biogenesis; peptidoglycan biosynthesis. Its function is as follows. Catalyzes the addition of meso-diaminopimelic acid to the nucleotide precursor UDP-N-acetylmuramoyl-L-alanyl-D-glutamate (UMAG) in the biosynthesis of bacterial cell-wall peptidoglycan. The sequence is that of UDP-N-acetylmuramoyl-L-alanyl-D-glutamate--2,6-diaminopimelate ligase from Anaplasma marginale (strain St. Maries).